A 339-amino-acid polypeptide reads, in one-letter code: Ketol-acid reductoisomerase (NADP(+)) (339 aa).

The 182-residue stretch at Met1–Thr182 folds into the KARI N-terminal Rossmann domain. Residues Tyr24–Gln27, Lys48, Ser51, Thr53, and Asp83–Gln86 each bind NADP(+). His108 is a catalytic residue. Gly134 contacts NADP(+). One can recognise a KARI C-terminal knotted domain in the interval Asn183–Ile328. Mg(2+) contacts are provided by Asp191, Glu195, Glu227, and Glu231. Ser252 contacts substrate.

This sequence belongs to the ketol-acid reductoisomerase family. The cofactor is Mg(2+).

The enzyme catalyses (2R)-2,3-dihydroxy-3-methylbutanoate + NADP(+) = (2S)-2-acetolactate + NADPH + H(+). It carries out the reaction (2R,3R)-2,3-dihydroxy-3-methylpentanoate + NADP(+) = (S)-2-ethyl-2-hydroxy-3-oxobutanoate + NADPH + H(+). It functions in the pathway amino-acid biosynthesis; L-isoleucine biosynthesis; L-isoleucine from 2-oxobutanoate: step 2/4. It participates in amino-acid biosynthesis; L-valine biosynthesis; L-valine from pyruvate: step 2/4. Functionally, involved in the biosynthesis of branched-chain amino acids (BCAA). Catalyzes an alkyl-migration followed by a ketol-acid reduction of (S)-2-acetolactate (S2AL) to yield (R)-2,3-dihydroxy-isovalerate. In the isomerase reaction, S2AL is rearranged via a Mg-dependent methyl migration to produce 3-hydroxy-3-methyl-2-ketobutyrate (HMKB). In the reductase reaction, this 2-ketoacid undergoes a metal-dependent reduction by NADPH to yield (R)-2,3-dihydroxy-isovalerate. This chain is Ketol-acid reductoisomerase (NADP(+)), found in Agrobacterium fabrum (strain C58 / ATCC 33970) (Agrobacterium tumefaciens (strain C58)).